The primary structure comprises 365 residues: Probable dual-specificity RNA methyltransferase RlmN (365 aa).

The active-site Proton acceptor is Glu-106. In terms of domain architecture, Radical SAM core spans 112 to 352 (YPDRVTLCVS…VTVRDTRGRE (241 aa)). Residues Cys-119 and Cys-357 are joined by a disulfide bond. [4Fe-4S] cluster is bound by residues Cys-126, Cys-130, and Cys-133. S-adenosyl-L-methionine contacts are provided by residues 181 to 182 (GE), Ser-215, 238 to 240 (SLH), and Asn-314. Residue Cys-357 is the S-methylcysteine intermediate of the active site.

This sequence belongs to the radical SAM superfamily. RlmN family. [4Fe-4S] cluster is required as a cofactor.

The protein localises to the cytoplasm. It carries out the reaction adenosine(2503) in 23S rRNA + 2 reduced [2Fe-2S]-[ferredoxin] + 2 S-adenosyl-L-methionine = 2-methyladenosine(2503) in 23S rRNA + 5'-deoxyadenosine + L-methionine + 2 oxidized [2Fe-2S]-[ferredoxin] + S-adenosyl-L-homocysteine. It catalyses the reaction adenosine(37) in tRNA + 2 reduced [2Fe-2S]-[ferredoxin] + 2 S-adenosyl-L-methionine = 2-methyladenosine(37) in tRNA + 5'-deoxyadenosine + L-methionine + 2 oxidized [2Fe-2S]-[ferredoxin] + S-adenosyl-L-homocysteine. Functionally, specifically methylates position 2 of adenine 2503 in 23S rRNA and position 2 of adenine 37 in tRNAs. In Thermobifida fusca (strain YX), this protein is Probable dual-specificity RNA methyltransferase RlmN.